The following is a 292-amino-acid chain: Protease HtpX (292 aa).

The next 2 membrane-spanning stretches (helical) occupy residues 5 to 25 and 34 to 54; these read VVLFLLTNFAVLILAGIVMSV and SGLLVMAAIFGFGGSFISLLL. H140 is a binding site for Zn(2+). The active site involves E141. Residue H144 coordinates Zn(2+). The next 2 helical transmembrane spans lie at 155–175 and 193–213; these read LLQGVLNTFVIVLARVVGGII and IIVFVLEMVFGLFATMIAMWF. Position 218 (E218) interacts with Zn(2+).

Belongs to the peptidase M48B family. The cofactor is Zn(2+).

The protein localises to the cell inner membrane. In Xanthomonas campestris pv. campestris (strain B100), this protein is Protease HtpX.